The sequence spans 193 residues: Peptide deformylase 2 (193 aa).

The Fe cation site is built by Cys-100 and His-142. Glu-143 is an active-site residue. His-146 lines the Fe cation pocket.

This sequence belongs to the polypeptide deformylase family. It depends on Fe(2+) as a cofactor.

It carries out the reaction N-terminal N-formyl-L-methionyl-[peptide] + H2O = N-terminal L-methionyl-[peptide] + formate. Its function is as follows. Removes the formyl group from the N-terminal Met of newly synthesized proteins. Requires at least a dipeptide for an efficient rate of reaction. N-terminal L-methionine is a prerequisite for activity but the enzyme has broad specificity at other positions. The sequence is that of Peptide deformylase 2 from Corynebacterium efficiens (strain DSM 44549 / YS-314 / AJ 12310 / JCM 11189 / NBRC 100395).